The sequence spans 323 residues: 4-diphosphocytidyl-2-C-methyl-D-erythritol kinase (323 aa).

Lysine 25 is an active-site residue. 110–120 serves as a coordination point for ATP; it reads PVAGGMAGGSA. Aspartate 152 is a catalytic residue.

This sequence belongs to the GHMP kinase family. IspE subfamily.

It carries out the reaction 4-CDP-2-C-methyl-D-erythritol + ATP = 4-CDP-2-C-methyl-D-erythritol 2-phosphate + ADP + H(+). It functions in the pathway isoprenoid biosynthesis; isopentenyl diphosphate biosynthesis via DXP pathway; isopentenyl diphosphate from 1-deoxy-D-xylulose 5-phosphate: step 3/6. Catalyzes the phosphorylation of the position 2 hydroxy group of 4-diphosphocytidyl-2C-methyl-D-erythritol. The chain is 4-diphosphocytidyl-2-C-methyl-D-erythritol kinase from Mycobacterium leprae (strain Br4923).